A 739-amino-acid polypeptide reads, in one-letter code: Catalase-peroxidase 2 (739 aa).

The signal sequence occupies residues 1-26 (MKKTTIPTLSALTLAMSLAFGGAAIA). The tryptophyl-tyrosyl-methioninium (Trp-Tyr) (with M-253) cross-link spans 105–227 (WHSAGVYRIF…MGATQMGLIY (123 aa)). His106 functions as the Proton acceptor in the catalytic mechanism. A cross-link (tryptophyl-tyrosyl-methioninium (Tyr-Met) (with W-105)) is located at residues 227–253 (YVNPEGPNGVPDPLASAKEIRDTFGRM). His268 is a binding site for heme b.

This sequence belongs to the peroxidase family. Peroxidase/catalase subfamily. In terms of assembly, homodimer or homotetramer. Requires heme b as cofactor. Post-translationally, formation of the three residue Trp-Tyr-Met cross-link is important for the catalase, but not the peroxidase activity of the enzyme.

The catalysed reaction is H2O2 + AH2 = A + 2 H2O. It carries out the reaction 2 H2O2 = O2 + 2 H2O. Its function is as follows. Bifunctional enzyme with both catalase and broad-spectrum peroxidase activity. The protein is Catalase-peroxidase 2 of Shewanella sp. (strain MR-4).